The following is an 804-amino-acid chain: G-type lectin S-receptor-like serine/threonine-protein kinase At1g61500 (804 aa).

A signal peptide spans 1–24 (MMTRFACLHLFTMFLFTLLSGSSS). The region spanning 25-145 (AVITTESPLS…VSERALWQSF (121 aa)) is the Bulb-type lectin domain. Topologically, residues 25–427 (AVITTESPLS…ELDGNKRKKT (403 aa)) are extracellular. N54, N135, and N237 each carry an N-linked (GlcNAc...) asparagine glycan. The EGF-like; atypical domain maps to 279-315 (PKKLCDFYGACGPFGLCVMSPSPMCKCFRGFVPKSVE). 2 disulfide bridges follow: C283/C295 and C289/C303. N-linked (GlcNAc...) asparagine glycans are attached at residues N321, N337, and N376. Residues 334–416 (CLGNSTGEDA…GELLSIRLAR (83 aa)) form the PAN domain. 2 disulfide bridges follow: C369/C390 and C373/C379. The helical transmembrane segment at 428–448 (IVASIVSLTLFMILGFTAFGV) threads the bilayer. The Cytoplasmic portion of the chain corresponds to 449–804 (WRCRVEHIAH…GMTQSVILGR (356 aa)). Positions 491–776 (FSLSNKLGQG…DLPSPKQPTF (286 aa)) constitute a Protein kinase domain. Residues 497–505 (LGQGGFGSV) and K519 each bind ATP. Phosphoserine occurs at positions 525 and 540. The interval 580–597 (RKRLEIDWPKRFDIIQGI) is caM-binding. D616 acts as the Proton acceptor in catalysis. Residues S620 and S633 each carry the phosphoserine modification. At T650 the chain carries Phosphothreonine. Residues S693 and S787 each carry the phosphoserine modification.

Belongs to the protein kinase superfamily. Ser/Thr protein kinase family.

It localises to the cell membrane. The catalysed reaction is L-seryl-[protein] + ATP = O-phospho-L-seryl-[protein] + ADP + H(+). It carries out the reaction L-threonyl-[protein] + ATP = O-phospho-L-threonyl-[protein] + ADP + H(+). This is G-type lectin S-receptor-like serine/threonine-protein kinase At1g61500 from Arabidopsis thaliana (Mouse-ear cress).